The sequence spans 438 residues: Xylose isomerase (438 aa).

Residues H102 and D105 contribute to the active site. Mg(2+) is bound by residues E233, E269, H272, D297, D308, D310, and D340.

This sequence belongs to the xylose isomerase family. As to quaternary structure, homotetramer. The cofactor is Mg(2+).

Its subcellular location is the cytoplasm. It carries out the reaction alpha-D-xylose = alpha-D-xylulofuranose. The polypeptide is Xylose isomerase (Solibacter usitatus (strain Ellin6076)).